Consider the following 463-residue polypeptide: L-seryl-tRNA(Sec) selenium transferase (463 aa).

Lys-295 bears the N6-(pyridoxal phosphate)lysine mark.

The protein belongs to the SelA family. As to quaternary structure, homodecamer; pentamer of dimers. Binds only one seryl-tRNA(Sec) per dimer. Requires pyridoxal 5'-phosphate as cofactor.

It is found in the cytoplasm. It catalyses the reaction L-seryl-tRNA(Sec) + selenophosphate + H(+) = L-selenocysteinyl-tRNA(Sec) + phosphate. It functions in the pathway aminoacyl-tRNA biosynthesis; selenocysteinyl-tRNA(Sec) biosynthesis; selenocysteinyl-tRNA(Sec) from L-seryl-tRNA(Sec) (bacterial route): step 1/1. Functionally, converts seryl-tRNA(Sec) to selenocysteinyl-tRNA(Sec) required for selenoprotein biosynthesis. This chain is L-seryl-tRNA(Sec) selenium transferase, found in Escherichia coli (strain 55989 / EAEC).